The following is a 469-amino-acid chain: 3-isopropylmalate dehydratase large subunit (469 aa).

[4Fe-4S] cluster-binding residues include C350, C410, and C413.

Belongs to the aconitase/IPM isomerase family. LeuC type 1 subfamily. As to quaternary structure, heterodimer of LeuC and LeuD. [4Fe-4S] cluster serves as cofactor.

The catalysed reaction is (2R,3S)-3-isopropylmalate = (2S)-2-isopropylmalate. It participates in amino-acid biosynthesis; L-leucine biosynthesis; L-leucine from 3-methyl-2-oxobutanoate: step 2/4. Catalyzes the isomerization between 2-isopropylmalate and 3-isopropylmalate, via the formation of 2-isopropylmaleate. The chain is 3-isopropylmalate dehydratase large subunit from Rhizobium meliloti (strain 1021) (Ensifer meliloti).